The sequence spans 305 residues: Ferredoxin--NADP reductase (305 aa).

The FAD site is built by E31, Y42, V82, and D274.

It belongs to the ferredoxin--NADP reductase type 2 family. Homodimer. Requires FAD as cofactor.

The catalysed reaction is 2 reduced [2Fe-2S]-[ferredoxin] + NADP(+) + H(+) = 2 oxidized [2Fe-2S]-[ferredoxin] + NADPH. The chain is Ferredoxin--NADP reductase from Ignicoccus hospitalis (strain KIN4/I / DSM 18386 / JCM 14125).